The chain runs to 576 residues: (E,E)-alpha-farnesene synthase (576 aa).

The (2E,6E)-farnesyl diphosphate site is built by arginine 289, aspartate 326, aspartate 330, arginine 468, and asparagine 471. Mg(2+) contacts are provided by aspartate 326 and aspartate 330. The short motif at 326-330 (DDVYD) is the DDXXD motif element. Residues asparagine 471, threonine 475, and glutamate 479 each coordinate Mg(2+). Positions 484 and 487 each coordinate K(+).

The protein belongs to the terpene synthase family. Tpsb subfamily. As to quaternary structure, monomer. It depends on Mg(2+) as a cofactor. Requires Mn(2+) as cofactor. K(+) serves as cofactor.

Its subcellular location is the cytoplasm. The catalysed reaction is (2E,6E)-farnesyl diphosphate = (3E,6E)-alpha-farnesene + diphosphate. Its function is as follows. Sesquiterpene synthase catalyzing the production of (E,E)-alpha-farnesene, the predominant terpene produced during storage of fruits. Produces all six isomers (E,E)-alpha-farnesene, (Z,E)-alpha-farnesene, (E,Z)-alpha-farnesene, (Z,Z)-alpha-farnesene, (E)-beta-farnesene and (Z)-beta-farnesene from a mix of isomeric forms of the farnesyl diphosphate precursor. Able to convert geranyl diphosphate to the monoterpenes (E)-beta-ocimene, linalool and beta-myrcene. Also has a prenyltransferase activity producing alpha-farnesene directly from geranyl diphosphate and isoprenyl diphosphate. The chain is (E,E)-alpha-farnesene synthase (AFS1) from Malus domestica (Apple).